Consider the following 565-residue polypeptide: Laccase-12 (565 aa).

Positions 1 to 24 are cleaved as a signal peptide; the sequence is MTTVHTFSILLFFCSLFSASLIIA. Plastocyanin-like domains follow at residues 32–148 and 158–310; these read VIQE…PTPG and RQTA…YKKT. The N-linked (GlcNAc...) asparagine glycan is linked to Asn-78. Residues His-82, His-84, His-127, and His-129 each contribute to the Cu cation site. N-linked (GlcNAc...) asparagine glycosylation is found at Asn-187, Asn-203, Asn-298, Asn-325, Asn-377, Asn-387, Asn-395, and Asn-428. The Plastocyanin-like 3 domain occupies 413 to 549; sequence DFPSKPPVKF…AMAFLVDNGV (137 aa). The Cu cation site is built by His-466, His-469, His-471, His-528, Cys-529, His-530, and His-534.

It belongs to the multicopper oxidase family. It depends on Cu cation as a cofactor. Predominantly expressed in the inflorescence stem.

The protein resides in the secreted. The protein localises to the extracellular space. It is found in the apoplast. The catalysed reaction is 4 hydroquinone + O2 = 4 benzosemiquinone + 2 H2O. Its function is as follows. Lignin degradation and detoxification of lignin-derived products. The protein is Laccase-12 (LAC12) of Arabidopsis thaliana (Mouse-ear cress).